The sequence spans 334 residues: Glycerol-3-phosphate dehydrogenase [NAD(P)+] (334 aa).

4 residues coordinate NADPH: serine 14, tyrosine 15, histidine 35, and lysine 109. 3 residues coordinate sn-glycerol 3-phosphate: lysine 109, glycine 138, and threonine 140. Alanine 142 contributes to the NADPH binding site. Positions 194, 247, 257, 258, and 259 each coordinate sn-glycerol 3-phosphate. Lysine 194 (proton acceptor) is an active-site residue. An NADPH-binding site is contributed by arginine 258. Valine 282 and glutamate 284 together coordinate NADPH.

The protein belongs to the NAD-dependent glycerol-3-phosphate dehydrogenase family.

Its subcellular location is the cytoplasm. It catalyses the reaction sn-glycerol 3-phosphate + NAD(+) = dihydroxyacetone phosphate + NADH + H(+). The enzyme catalyses sn-glycerol 3-phosphate + NADP(+) = dihydroxyacetone phosphate + NADPH + H(+). It functions in the pathway membrane lipid metabolism; glycerophospholipid metabolism. Its function is as follows. Catalyzes the reduction of the glycolytic intermediate dihydroxyacetone phosphate (DHAP) to sn-glycerol 3-phosphate (G3P), the key precursor for phospholipid synthesis. The polypeptide is Glycerol-3-phosphate dehydrogenase [NAD(P)+] (Aeromonas salmonicida (strain A449)).